Reading from the N-terminus, the 151-residue chain is MSKLPALVSLRMNEIRGIYIETNNRVVEEMDAVIDEFAKDVGSSPDISTNVRTYLEERIRYIREFVVDHIGFSISEFRTLYNPNGNESIKSRRFPKFITEALERSFEIDQYPSEAEKARLAKICKLSTKQINNWFTNKRNRTKGHEGGRQY.

The segment at residues 87-146 (ESIKSRRFPKFITEALERSFEIDQYPSEAEKARLAKICKLSTKQINNWFTNKRNRTKGHE) is a DNA-binding region (homeobox).

The protein localises to the nucleus. This chain is Homeobox protein HD-1 (HD-1), found in Encephalitozoon cuniculi (strain GB-M1) (Microsporidian parasite).